The sequence spans 62 residues: Large ribosomal subunit protein eL37 (62 aa).

C20, C23, C35, and C38 together coordinate Zn(2+). Residues 20–38 (CRRCGRVSYNVKKGYCAAC) form a C4-type zinc finger.

It belongs to the eukaryotic ribosomal protein eL37 family. Part of the 50S ribosomal subunit. Zn(2+) is required as a cofactor.

Its function is as follows. Binds to the 23S rRNA. The chain is Large ribosomal subunit protein eL37 from Pyrococcus furiosus (strain ATCC 43587 / DSM 3638 / JCM 8422 / Vc1).